The following is a 146-amino-acid chain: Cell division protein SepF (146 aa).

This sequence belongs to the SepF family. In terms of assembly, homodimer. Interacts with FtsZ.

It is found in the cytoplasm. Functionally, cell division protein that is part of the divisome complex and is recruited early to the Z-ring. Probably stimulates Z-ring formation, perhaps through the cross-linking of FtsZ protofilaments. Its function overlaps with FtsA. The sequence is that of Cell division protein SepF from Alkaliphilus oremlandii (strain OhILAs) (Clostridium oremlandii (strain OhILAs)).